The primary structure comprises 225 residues: uncharacterized protein (225 aa).

The first 21 residues, 1-21, serve as a signal peptide directing secretion; the sequence is MSLHYYLFIFWILAFVQFSHA.

In terms of tissue distribution, prismatic layer of shell (at protein level).

Its subcellular location is the secreted. This is an uncharacterized protein from Margaritifera margaritifera (Freshwater pearl mussel).